We begin with the raw amino-acid sequence, 260 residues long: Snake venom serine protease Dav-X (260 aa).

A signal peptide spans 1 to 18 (MVLIRVLANLLILQLSYA). The propeptide occupies 19-24 (QKSSEL). In terms of domain architecture, Peptidase S1 spans 25-251 (VIGGVECDIN…YTDWIQNIIA (227 aa)). Intrachain disulfides connect C31-C165, C52-C68, C102-C258, C144-C212, C176-C191, and C202-C227. H67 (charge relay system) is an active-site residue. A glycan (N-linked (GlcNAc...) asparagine) is linked at N81. The active-site Charge relay system is the D112. N-linked (GlcNAc...) asparagine glycosylation is found at N124 and N172. Catalysis depends on S206, which acts as the Charge relay system. A glycan (N-linked (GlcNAc...) asparagine) is linked at N241.

This sequence belongs to the peptidase S1 family. Snake venom subfamily. As to quaternary structure, monomer. As to expression, expressed by the venom gland.

The protein localises to the secreted. In terms of biological role, snake venom serine protease that may act in the hemostasis system of the prey. This chain is Snake venom serine protease Dav-X, found in Deinagkistrodon acutus (Hundred-pace snake).